A 102-amino-acid polypeptide reads, in one-letter code: Small ribosomal subunit protein uS10 (102 aa).

The tract at residues P37–F61 is disordered.

It belongs to the universal ribosomal protein uS10 family. In terms of assembly, part of the 30S ribosomal subunit.

In terms of biological role, involved in the binding of tRNA to the ribosomes. The polypeptide is Small ribosomal subunit protein uS10 (Methanococcus vannielii (strain ATCC 35089 / DSM 1224 / JCM 13029 / OCM 148 / SB)).